The primary structure comprises 469 residues: Tubulin gamma-2 chain (469 aa).

A GTP-binding site is contributed by 142 to 148; the sequence is AGGTGSG.

This sequence belongs to the tubulin family.

Its subcellular location is the cytoplasm. It is found in the cytoskeleton. The protein localises to the microtubule organizing center. Tubulin is the major constituent of microtubules. The gamma chain is found at microtubule organizing centers (MTOC) such as the spindle poles, suggesting that it is involved in the minus-end nucleation of microtubule assembly. This is Tubulin gamma-2 chain (TUBG2) from Oryza sativa subsp. japonica (Rice).